A 265-amino-acid chain; its full sequence is Probable autolysin SsaALP (265 aa).

Positions 1–25 (MKKLAFAITATSGAAAFLTHHDAQA) are cleaved as a signal peptide. 2 LysM domains span residues 27 to 70 (TQHT…VISV) and 89 to 132 (SSHT…TLQI). Residues 72–92 (GSDAQNTSNTSPQAGSASSHT) form a disordered region. The span at 74-92 (DAQNTSNTSPQAGSASSHT) shows a compositional bias: polar residues. Residues 141 to 265 (TPTATTGSNG…SEVSSYAFIH (125 aa)) enclose the Peptidase C51 domain.

It catalyses the reaction Hydrolyzes the link between N-acetylmuramoyl residues and L-amino acid residues in certain cell-wall glycopeptides.. Functionally, has weak lytic activity toward S.aureus cells. This is Probable autolysin SsaALP from Staphylococcus aureus (strain NCTC 8325 / PS 47).